We begin with the raw amino-acid sequence, 494 residues long: MKVLYVCTELFPFLKTGGLADVSAGLAPALQAVGCEVRLLLPAFPAIANQALSTRPIASLPAGPMPWGPAPVLPPASLTLATLPGLELPVYLVQAPALYDRPGNPYLGPDGKDWSDNAIRFAALGWAGATLGQGLDPHWRPDVIHCHDWHSGLTPTYVRAFAAAKQATPATVFTIHNLAYQGLFAAAEVTRLGLPKSWFDIDGFEFFGKVSFMKAALRYADRITTVSPTYAREISSEAQGCGLDGLLRERANSLSGILNGVDDLIWNPATDALLPAPYDEHKLQGKTLAKRALQTKFGLEPRANALVFGAVSRLTEQKGLHLLPQVLADMVQRGGQLALLGQGDVALERAFVDAAIRYPGQVGVRIGYDEVTAHAVIAGADVILVPSEFEPCGLTQLYGLRYGTLPLVRRVGGLADTVVDCTLENLDEGSATGFVFDELSPAGLLSAVRRAFVLFRRPDEWLAVQQRGMGLRFDWLASAQHYLAMYQTLRPGAK.

An ADP-alpha-D-glucose-binding site is contributed by lysine 15.

It belongs to the glycosyltransferase 1 family. Bacterial/plant glycogen synthase subfamily.

The enzyme catalyses [(1-&gt;4)-alpha-D-glucosyl](n) + ADP-alpha-D-glucose = [(1-&gt;4)-alpha-D-glucosyl](n+1) + ADP + H(+). It functions in the pathway glycan biosynthesis; glycogen biosynthesis. Functionally, synthesizes alpha-1,4-glucan chains using ADP-glucose. The sequence is that of Glycogen synthase from Albidiferax ferrireducens (strain ATCC BAA-621 / DSM 15236 / T118) (Rhodoferax ferrireducens).